Reading from the N-terminus, the 377-residue chain is Chaperone protein DnaJ (377 aa).

Positions 3-67 (DYYDLLGVGR…QTRARYDQFG (65 aa)) constitute a J domain. A CR-type zinc finger spans residues 133-215 (GQEQEIKIPH…CGGQGVRQVR (83 aa)). Cysteine 146, cysteine 149, cysteine 163, cysteine 166, cysteine 189, cysteine 192, cysteine 203, and cysteine 206 together coordinate Zn(2+). CXXCXGXG motif repeat units lie at residues 146-153 (CDTCGGSG), 163-170 (CGTCGGAG), 189-196 (CPNCGGTG), and 203-210 (CNACGGQG).

Belongs to the DnaJ family. In terms of assembly, homodimer. Zn(2+) is required as a cofactor.

Its subcellular location is the cytoplasm. Functionally, participates actively in the response to hyperosmotic and heat shock by preventing the aggregation of stress-denatured proteins and by disaggregating proteins, also in an autonomous, DnaK-independent fashion. Unfolded proteins bind initially to DnaJ; upon interaction with the DnaJ-bound protein, DnaK hydrolyzes its bound ATP, resulting in the formation of a stable complex. GrpE releases ADP from DnaK; ATP binding to DnaK triggers the release of the substrate protein, thus completing the reaction cycle. Several rounds of ATP-dependent interactions between DnaJ, DnaK and GrpE are required for fully efficient folding. Also involved, together with DnaK and GrpE, in the DNA replication of plasmids through activation of initiation proteins. In Parasynechococcus marenigrum (strain WH8102), this protein is Chaperone protein DnaJ.